Consider the following 126-residue polypeptide: MNRRRPSAPAPHLETGNRGERRALEHLTGQGLELLECNFRCRAGEIDLIMRDGEVVVFVEVRVRTHPGYGGALASITPAKQRRLARAAARWLQRHRLTQRAVCRFDVVTFDGERPQWLRHAFTAPG.

Belongs to the UPF0102 family.

In Alkalilimnicola ehrlichii (strain ATCC BAA-1101 / DSM 17681 / MLHE-1), this protein is UPF0102 protein Mlg_2205.